Consider the following 128-residue polypeptide: Leucine-rich single-pass membrane protein 1 (128 aa).

S24 is subject to Phosphoserine. Residues 65–85 (VGLIIVLIISLALVSFVIFLI) form a helical membrane-spanning segment. The stretch at 87-111 (QTENKMEDVSRRLAAEGKDIDDLKK) forms a coiled coil.

The protein localises to the membrane. The chain is Leucine-rich single-pass membrane protein 1 (LSMEM1) from Bos taurus (Bovine).